Here is a 272-residue protein sequence, read N- to C-terminus: Shikimate dehydrogenase (NADP(+)) (272 aa).

Shikimate-binding positions include 14–16 (SKS) and threonine 61. Lysine 65 serves as the catalytic Proton acceptor. Residue glutamate 77 participates in NADP(+) binding. Shikimate-binding residues include asparagine 86 and aspartate 102. NADP(+) is bound by residues 126–130 (GAGGA), 149–154 (NRTVSR), and methionine 213. Tyrosine 215 lines the shikimate pocket. Glycine 237 contacts NADP(+).

It belongs to the shikimate dehydrogenase family. Homodimer.

It catalyses the reaction shikimate + NADP(+) = 3-dehydroshikimate + NADPH + H(+). It participates in metabolic intermediate biosynthesis; chorismate biosynthesis; chorismate from D-erythrose 4-phosphate and phosphoenolpyruvate: step 4/7. In terms of biological role, involved in the biosynthesis of the chorismate, which leads to the biosynthesis of aromatic amino acids. Catalyzes the reversible NADPH linked reduction of 3-dehydroshikimate (DHSA) to yield shikimate (SA). This Escherichia coli O6:K15:H31 (strain 536 / UPEC) protein is Shikimate dehydrogenase (NADP(+)).